The sequence spans 116 residues: Non-specific lipid-transfer protein AP10 (116 aa).

A signal peptide spans 1 to 26; the sequence is MKGTSMGVAILAMIVMAQLMVHPSVA. 4 cysteine pairs are disulfide-bonded: C29/C76, C39/C53, C54/C98, and C74/C112.

Belongs to the plant LTP family. In terms of tissue distribution, in germinating seeds, detected in the entire surface of the cotyledons, shoot meristem, inter-cotyledon space, primary xylem and immature vascular elements (at protein level). Expressed in seeds, but not the aerial parts of the plant.

It localises to the secreted. It is found in the extracellular space. The protein resides in the membrane. Its function is as follows. Plant non-specific lipid-transfer proteins transfer phospholipids as well as galactolipids across membranes. May play a role in wax or cutin deposition in the cell walls of expanding epidermal cells and certain secretory tissues. Permeabilizes the membrane of fungal spores, inhibits germination of the spores of the fungus F.solani at a concentration of 40 ug/ml. Inhibits the growth of F.solani with an IC(50) of 6.5 ug/ml, weakly inhibits the growth of the fungus A.alternata. Binds oleoyl-CoA. This chain is Non-specific lipid-transfer protein AP10, found in Helianthus annuus (Common sunflower).